The sequence spans 216 residues: 3-isopropylmalate dehydratase small subunit (216 aa).

It belongs to the LeuD family. LeuD type 1 subfamily. Heterodimer of LeuC and LeuD.

It catalyses the reaction (2R,3S)-3-isopropylmalate = (2S)-2-isopropylmalate. The protein operates within amino-acid biosynthesis; L-leucine biosynthesis; L-leucine from 3-methyl-2-oxobutanoate: step 2/4. Functionally, catalyzes the isomerization between 2-isopropylmalate and 3-isopropylmalate, via the formation of 2-isopropylmaleate. The sequence is that of 3-isopropylmalate dehydratase small subunit from Burkholderia thailandensis (strain ATCC 700388 / DSM 13276 / CCUG 48851 / CIP 106301 / E264).